The primary structure comprises 122 residues: Large ribosomal subunit protein uL14 (122 aa).

The protein belongs to the universal ribosomal protein uL14 family. In terms of assembly, part of the 50S ribosomal subunit. Forms a cluster with proteins L3 and L19. In the 70S ribosome, L14 and L19 interact and together make contacts with the 16S rRNA in bridges B5 and B8.

Its function is as follows. Binds to 23S rRNA. Forms part of two intersubunit bridges in the 70S ribosome. This chain is Large ribosomal subunit protein uL14, found in Acidovorax sp. (strain JS42).